Consider the following 276-residue polypeptide: Large ribosomal subunit protein uL2 (276 aa).

The tract at residues 225 to 276 (MNPNDHPHGGGEGRNPIGRNPVTPWGKPALGAKTRKKKHPSNRFIVKRRGKK) is disordered. The segment covering 257 to 276 (KTRKKKHPSNRFIVKRRGKK) has biased composition (basic residues).

This sequence belongs to the universal ribosomal protein uL2 family. Part of the 50S ribosomal subunit. Forms a bridge to the 30S subunit in the 70S ribosome.

In terms of biological role, one of the primary rRNA binding proteins. Required for association of the 30S and 50S subunits to form the 70S ribosome, for tRNA binding and peptide bond formation. It has been suggested to have peptidyltransferase activity; this is somewhat controversial. Makes several contacts with the 16S rRNA in the 70S ribosome. In Desulfitobacterium hafniense (strain Y51), this protein is Large ribosomal subunit protein uL2.